Consider the following 295-residue polypeptide: MAITAQMVKELREKTGAGMMDCKKALTETNGDMEKAIDFLREKGIAKAAKKADRIAAEGLTFIETNGNDGLILELNSETDFVAKNEGFQTLIKELAAHLLANKPANVEEAMAQTMENGKKVEEHINEAIAKIGEKLTLRRFEIVSKTDADAFGAYLHMGGRIGVLTVLEGSTDEAAAKDVAMHIAAVNPKYIDRDAVTAEEVEHERQVLTQQALNEGKPEKIVAKMVEGRLGKFFEEICLLDQAFVKNPDMKVRQFVESKGGTLKGFVRYAVGEGIEKREDNFAEEVMNQVKGSN.

The tract at residues 79–82 is involved in Mg(2+) ion dislocation from EF-Tu; sequence TDFV.

The protein belongs to the EF-Ts family.

It is found in the cytoplasm. Functionally, associates with the EF-Tu.GDP complex and induces the exchange of GDP to GTP. It remains bound to the aminoacyl-tRNA.EF-Tu.GTP complex up to the GTP hydrolysis stage on the ribosome. This is Elongation factor Ts from Bacillus anthracis (strain A0248).